We begin with the raw amino-acid sequence, 393 residues long: Digeranylgeranylglycerophospholipid reductase (393 aa).

A14, D33, C44, A45, G47, R100, A124, D280, G292, and I293 together coordinate FAD.

It belongs to the geranylgeranyl reductase family. DGGGPL reductase subfamily. FAD is required as a cofactor.

It catalyses the reaction a 2,3-bis-O-phytanyl-sn-glycerol 1-phospholipid + 8 A = a 2,3-bis-O-(geranylgeranyl)-sn-glycerol 1-phospholipid + 8 AH2. The enzyme catalyses 2,3-bis-O-(phytanyl)-sn-glycerol 1-phosphate + 8 A = 2,3-bis-O-(geranylgeranyl)-sn-glycerol 1-phosphate + 8 AH2. The catalysed reaction is CDP-2,3-bis-O-(geranylgeranyl)-sn-glycerol + 8 AH2 = CDP-2,3-bis-O-(phytanyl)-sn-glycerol + 8 A. It carries out the reaction archaetidylserine + 8 AH2 = 2,3-bis-O-phytanyl-sn-glycero-3-phospho-L-serine + 8 A. Its pathway is membrane lipid metabolism; glycerophospholipid metabolism. Is involved in the reduction of 2,3-digeranylgeranylglycerophospholipids (unsaturated archaeols) into 2,3-diphytanylglycerophospholipids (saturated archaeols) in the biosynthesis of archaeal membrane lipids. Catalyzes the formation of archaetidic acid (2,3-di-O-phytanyl-sn-glyceryl phosphate) from 2,3-di-O-geranylgeranylglyceryl phosphate (DGGGP) via the hydrogenation of each double bond of the isoprenoid chains. Is also probably able to reduce double bonds of geranyl groups in CDP-2,3-bis-O-(geranylgeranyl)-sn-glycerol and archaetidylserine, thus acting at various stages in the biosynthesis of archaeal membrane lipids. This chain is Digeranylgeranylglycerophospholipid reductase, found in Methanobrevibacter smithii (strain ATCC 35061 / DSM 861 / OCM 144 / PS).